Reading from the N-terminus, the 400-residue chain is Laminin subunit B (400 aa).

3 Laminin EGF-like domains span residues 1–5 (EGCKP), 6–53 (CECD…GCKS), and 54–100 (CTCN…QCIP). Intrachain disulfides connect C6–C18, C8–C25, C27–C36, C39–C51, C54–C66, C56–C73, C75–C84, and C87–C98. Residues 101 to 400 (CGECFDNWDK…AEAKNNAHEA (300 aa)) are domain II and I. Residues 140 to 235 (KEFEELEQVL…RENALEIQEQ (96 aa)) are a coiled coil. N-linked (GlcNAc...) asparagine glycosylation is found at N160, N175, N216, N266, N283, N310, and N356. Residues 353–400 (EAKNTSRKAEELIKSKYRSTSSTLSELENSNKQCKQATAEAKNNAHEA) are a coiled coil. Residues 369–400 (YRSTSSTLSELENSNKQCKQATAEAKNNAHEA) form a disordered region. Low complexity predominate over residues 371–383 (STSSTLSELENSN).

As to quaternary structure, laminin is a complex glycoprotein, consisting of three different polypeptide chains (alpha, beta, gamma), which are bound to each other by disulfide bonds into a cross-shaped molecule comprising one long and three short arms with globules at each end. As to expression, individual glial and muscle cells.

It localises to the secreted. Its subcellular location is the extracellular space. The protein resides in the extracellular matrix. Functionally, binding to cells via a high affinity receptor, laminin is thought to mediate the attachment, migration and organization of cells into tissues during embryonic development by interacting with other extracellular matrix components. The chain is Laminin subunit B from Hirudo medicinalis (Medicinal leech).